The sequence spans 135 residues: MAGRVGQMKNQDEVHQNQILRELFLKELRAQKLYTQYHVNPLRKVHTITRKPMSWHDNLEEPEDAKFLNLIHHAAQGPKKKYSETQTEAQEIGWDPNPLINPDRQDHRLNHFRVYHDITLYKAKLWSLGEDDHQK.

The tract at residues 76 to 100 (QGPKKKYSETQTEAQEIGWDPNPLI) is disordered.

Belongs to the CFAP144 family. As to quaternary structure, microtubule inner protein component of sperm flagellar doublet microtubules. Predominantly expressed in tissues containing motile cilia.

Its subcellular location is the cytoplasm. It localises to the cytoskeleton. It is found in the cilium axoneme. The protein localises to the flagellum axoneme. This is Cilia- and flagella-associated protein 144 from Mus musculus (Mouse).